A 159-amino-acid chain; its full sequence is Ribosomal RNA large subunit methyltransferase H (159 aa).

S-adenosyl-L-methionine contacts are provided by residues glycine 108 and 127–132 (FGKLTM).

The protein belongs to the RNA methyltransferase RlmH family. In terms of assembly, homodimer.

Its subcellular location is the cytoplasm. It catalyses the reaction pseudouridine(1915) in 23S rRNA + S-adenosyl-L-methionine = N(3)-methylpseudouridine(1915) in 23S rRNA + S-adenosyl-L-homocysteine + H(+). Specifically methylates the pseudouridine at position 1915 (m3Psi1915) in 23S rRNA. This is Ribosomal RNA large subunit methyltransferase H from Lactobacillus helveticus (strain DPC 4571).